A 296-amino-acid polypeptide reads, in one-letter code: Phosphatidylserine decarboxylase proenzyme (296 aa).

Catalysis depends on charge relay system; for autoendoproteolytic cleavage activity residues aspartate 113, histidine 169, and serine 256. Serine 256 (schiff-base intermediate with substrate; via pyruvic acid; for decarboxylase activity) is an active-site residue. Residue serine 256 is modified to Pyruvic acid (Ser); by autocatalysis.

It belongs to the phosphatidylserine decarboxylase family. PSD-B subfamily. Prokaryotic type II sub-subfamily. In terms of assembly, heterodimer of a large membrane-associated beta subunit and a small pyruvoyl-containing alpha subunit. The cofactor is pyruvate. Is synthesized initially as an inactive proenzyme. Formation of the active enzyme involves a self-maturation process in which the active site pyruvoyl group is generated from an internal serine residue via an autocatalytic post-translational modification. Two non-identical subunits are generated from the proenzyme in this reaction, and the pyruvate is formed at the N-terminus of the alpha chain, which is derived from the carboxyl end of the proenzyme. The autoendoproteolytic cleavage occurs by a canonical serine protease mechanism, in which the side chain hydroxyl group of the serine supplies its oxygen atom to form the C-terminus of the beta chain, while the remainder of the serine residue undergoes an oxidative deamination to produce ammonia and the pyruvoyl prosthetic group on the alpha chain. During this reaction, the Ser that is part of the protease active site of the proenzyme becomes the pyruvoyl prosthetic group, which constitutes an essential element of the active site of the mature decarboxylase.

Its subcellular location is the cell membrane. It carries out the reaction a 1,2-diacyl-sn-glycero-3-phospho-L-serine + H(+) = a 1,2-diacyl-sn-glycero-3-phosphoethanolamine + CO2. Its pathway is phospholipid metabolism; phosphatidylethanolamine biosynthesis; phosphatidylethanolamine from CDP-diacylglycerol: step 2/2. In terms of biological role, catalyzes the formation of phosphatidylethanolamine (PtdEtn) from phosphatidylserine (PtdSer). This chain is Phosphatidylserine decarboxylase proenzyme, found in Clostridium kluyveri (strain ATCC 8527 / DSM 555 / NBRC 12016 / NCIMB 10680 / K1).